A 1092-amino-acid polypeptide reads, in one-letter code: Probable arabinosyltransferase A (1092 aa).

13 helical membrane passes run I21 to L43, A214 to L233, G249 to A271, V324 to L346, V353 to L372, P382 to I399, L404 to I426, F517 to L534, G541 to L563, W568 to F590, A602 to Y624, I639 to W661, and A682 to V704. The interval P772 to D798 is disordered.

This sequence belongs to the emb family.

It localises to the cell membrane. Functionally, arabinosyl transferase responsible for the polymerization of arabinose into the arabinan of arabinogalactan. This Mycolicibacterium smegmatis (Mycobacterium smegmatis) protein is Probable arabinosyltransferase A (embA).